The primary structure comprises 838 residues: uncharacterized protein (838 aa).

This is an uncharacterized protein from Rickettsia conorii (strain ATCC VR-613 / Malish 7).